The sequence spans 205 residues: Dephospho-CoA kinase (205 aa).

Positions 13-205 constitute a DPCK domain; the sequence is RIGLTGGIAS…KWINTIREIL (193 aa). 21-26 provides a ligand contact to ATP; that stretch reads ASGKST.

Belongs to the CoaE family.

The protein resides in the cytoplasm. It carries out the reaction 3'-dephospho-CoA + ATP = ADP + CoA + H(+). Its pathway is cofactor biosynthesis; coenzyme A biosynthesis; CoA from (R)-pantothenate: step 5/5. In terms of biological role, catalyzes the phosphorylation of the 3'-hydroxyl group of dephosphocoenzyme A to form coenzyme A. This chain is Dephospho-CoA kinase, found in Prochlorococcus marinus (strain MIT 9312).